The chain runs to 267 residues: L-aspartate dehydrogenase 2 (267 aa).

Residues alanine 123 and asparagine 189 each coordinate NAD(+). Residue histidine 219 is part of the active site.

The protein belongs to the L-aspartate dehydrogenase family.

It catalyses the reaction L-aspartate + NADP(+) + H2O = oxaloacetate + NH4(+) + NADPH + H(+). The catalysed reaction is L-aspartate + NAD(+) + H2O = oxaloacetate + NH4(+) + NADH + H(+). It functions in the pathway cofactor biosynthesis; NAD(+) biosynthesis; iminoaspartate from L-aspartate (dehydrogenase route): step 1/1. Functionally, specifically catalyzes the NAD or NADP-dependent dehydrogenation of L-aspartate to iminoaspartate. The protein is L-aspartate dehydrogenase 2 of Bordetella bronchiseptica (strain ATCC BAA-588 / NCTC 13252 / RB50) (Alcaligenes bronchisepticus).